Here is a 194-residue protein sequence, read N- to C-terminus: Molybdenum cofactor guanylyltransferase (194 aa).

GTP contacts are provided by residues 12–14 (LAG), Lys-25, Asn-53, Asp-71, and Asp-101. A Mg(2+)-binding site is contributed by Asp-101.

This sequence belongs to the MobA family. As to quaternary structure, monomer. Mg(2+) serves as cofactor.

The protein resides in the cytoplasm. It carries out the reaction Mo-molybdopterin + GTP + H(+) = Mo-molybdopterin guanine dinucleotide + diphosphate. Transfers a GMP moiety from GTP to Mo-molybdopterin (Mo-MPT) cofactor (Moco or molybdenum cofactor) to form Mo-molybdopterin guanine dinucleotide (Mo-MGD) cofactor. The chain is Molybdenum cofactor guanylyltransferase from Escherichia coli O6:H1 (strain CFT073 / ATCC 700928 / UPEC).